We begin with the raw amino-acid sequence, 609 residues long: Proteasome-associated ATPase (609 aa).

The tract at residues 1–24 is disordered; the sequence is MGESERSEAFGIPRDSPLSSGDAA. Residues 20 to 96 adopt a coiled-coil conformation; sequence SGDAAELEQL…LREEVDRLGQ (77 aa). Residue 296 to 301 coordinates ATP; that stretch reads GCGKTL. Positions 608–609 are docks into pockets in the proteasome alpha-ring; the sequence is YL.

This sequence belongs to the AAA ATPase family. Homohexamer. Assembles into a hexameric ring structure that caps the 20S proteasome core. Strongly interacts with the prokaryotic ubiquitin-like protein Pup through a hydrophobic interface; the interacting region of ARC lies in its N-terminal coiled-coil domain. There is one Pup binding site per ARC hexamer ring. Upon ATP-binding, the C-terminus of ARC interacts with the alpha-rings of the proteasome core, possibly by binding to the intersubunit pockets.

It participates in protein degradation; proteasomal Pup-dependent pathway. In terms of biological role, ATPase which is responsible for recognizing, binding, unfolding and translocation of pupylated proteins into the bacterial 20S proteasome core particle. May be essential for opening the gate of the 20S proteasome via an interaction with its C-terminus, thereby allowing substrate entry and access to the site of proteolysis. Thus, the C-termini of the proteasomal ATPase may function like a 'key in a lock' to induce gate opening and therefore regulate proteolysis. The protein is Proteasome-associated ATPase of Mycobacterium bovis (strain BCG / Pasteur 1173P2).